The following is a 332-amino-acid chain: Twinfilin-1 (332 aa).

Residues 5–132 (SGIVAEQALL…VDLKNFDSAR (128 aa)) enclose the ADF-H 1 domain. Phosphoserine occurs at positions 167 and 172. Residues 173–300 (PLSLTFRVNS…DKSLLMATNK (128 aa)) form the ADF-H 2 domain. Residues 301 to 332 (EDSLDHGSNPDLPNKSNLKFNKPKGPLRKRRT) are disordered. Residues 321–332 (NKPKGPLRKRRT) show a composition bias toward basic residues.

It belongs to the actin-binding proteins ADF family. Twinfilin subfamily. Interacts with G-actin; ADP-actin form.

The protein localises to the cytoplasm. It is found in the cytoskeleton. Functionally, actin-binding protein involved in motile and morphological processes. Inhibits actin polymerization, likely by sequestering G-actin. Prevents actin filament assembly by forming a 1:1 complex with actin monomers, and inhibits the nucleotide exchange reaction of actin monomers. The polypeptide is Twinfilin-1 (TWF1) (Saccharomyces cerevisiae (strain ATCC 204508 / S288c) (Baker's yeast)).